Reading from the N-terminus, the 436-residue chain is Glutamyl-tRNA(Gln) amidotransferase subunit D (436 aa).

Positions 91-420 (QNISIISTGG…GEVAKLMNKN (330 aa)) constitute an Asparaginase/glutaminase domain. Catalysis depends on residues threonine 101, threonine 177, aspartate 178, and lysine 254.

Belongs to the asparaginase 1 family. GatD subfamily. Heterodimer of GatD and GatE.

The enzyme catalyses L-glutamyl-tRNA(Gln) + L-glutamine + ATP + H2O = L-glutaminyl-tRNA(Gln) + L-glutamate + ADP + phosphate + H(+). Allows the formation of correctly charged Gln-tRNA(Gln) through the transamidation of misacylated Glu-tRNA(Gln) in organisms which lack glutaminyl-tRNA synthetase. The reaction takes place in the presence of glutamine and ATP through an activated gamma-phospho-Glu-tRNA(Gln). The GatDE system is specific for glutamate and does not act on aspartate. In Methanobrevibacter smithii (strain ATCC 35061 / DSM 861 / OCM 144 / PS), this protein is Glutamyl-tRNA(Gln) amidotransferase subunit D.